Consider the following 633-residue polypeptide: MTTPKKTAKTSGNEARELADLSEDIGICFKYPNSERVYLQGSRDDIRVPLREIRQDDTYTAQGTEANPPIPVYDTSGVYGDPAAHIDLKQGLPHIRTAWLDERGDTEILPKLSSEYGIERAHDPKTAHLRFNQITRPRRAKSGSNVTQLHYARQGIITPEMEFVAIRERLKLDELSQKPEYAKLLEQHAGQSFGANIPTHPDQITPEFVRQEIAAGRAIIPANINHPELEPMIIGRNFRVKINGNLGNSAVTSSLTEEVEKMVWSLRWGADTIMDLSTGAHIHETREWIIRNAPVPIGTVPIYQALEKTGGIAEDLTWDLFRDTLIEQAEQGVDYFTIHAGVLLRYVPMTANRLTGIVSRGGSIMAKWCLAHHRENFLYTHFDEICEIMKAYDVSFSLGDGLRPGCIADANDESQFAELHTLGELTDKAWKHDVQVMIEGPGHVPLQRVKENMTEELQHCFEAPFYTLGPLVTDIAPGYDHITSGIGAANIGWYGTAMLCYVTPKEHLGLPDKEDVRTGIITYKLAAHAADLAKGWPGAQLRDNALSKARFEFRWRDQFRLSLDPERAESFHDETLPAEGAKIAHFCSMCGPKFCSMKITQEVRDYADKQKAQRQGMEEKAVEFVKKGAKIYS.

Substrate contacts are provided by residues Asn-245, Met-274, Tyr-303, His-339, 359-361 (SRG), 400-403 (DGLR), and Glu-439. His-443 serves as a coordination point for Zn(2+). Tyr-466 provides a ligand contact to substrate. Residue His-507 participates in Zn(2+) binding. Residues Cys-587, Cys-590, and Cys-595 each coordinate [4Fe-4S] cluster.

The protein belongs to the ThiC family. As to quaternary structure, homodimer. [4Fe-4S] cluster serves as cofactor.

The catalysed reaction is 5-amino-1-(5-phospho-beta-D-ribosyl)imidazole + S-adenosyl-L-methionine = 4-amino-2-methyl-5-(phosphooxymethyl)pyrimidine + CO + 5'-deoxyadenosine + formate + L-methionine + 3 H(+). It functions in the pathway cofactor biosynthesis; thiamine diphosphate biosynthesis. Functionally, catalyzes the synthesis of the hydroxymethylpyrimidine phosphate (HMP-P) moiety of thiamine from aminoimidazole ribotide (AIR) in a radical S-adenosyl-L-methionine (SAM)-dependent reaction. In Neisseria meningitidis serogroup B (strain ATCC BAA-335 / MC58), this protein is Phosphomethylpyrimidine synthase.